Reading from the N-terminus, the 371-residue chain is Anhydro-N-acetylmuramic acid kinase (371 aa).

Position 12–20 (12–20 (GTVLDGNID)) interacts with ATP.

The protein belongs to the anhydro-N-acetylmuramic acid kinase family.

It carries out the reaction 1,6-anhydro-N-acetyl-beta-muramate + ATP + H2O = N-acetyl-D-muramate 6-phosphate + ADP + H(+). Its pathway is amino-sugar metabolism; 1,6-anhydro-N-acetylmuramate degradation. It participates in cell wall biogenesis; peptidoglycan recycling. Its function is as follows. Catalyzes the specific phosphorylation of 1,6-anhydro-N-acetylmuramic acid (anhMurNAc) with the simultaneous cleavage of the 1,6-anhydro ring, generating MurNAc-6-P. Is required for the utilization of anhMurNAc either imported from the medium or derived from its own cell wall murein, and thus plays a role in cell wall recycling. The sequence is that of Anhydro-N-acetylmuramic acid kinase from Brucella anthropi (strain ATCC 49188 / DSM 6882 / CCUG 24695 / JCM 21032 / LMG 3331 / NBRC 15819 / NCTC 12168 / Alc 37) (Ochrobactrum anthropi).